Here is a 225-residue protein sequence, read N- to C-terminus: T4 protein (225 aa).

The protein belongs to the poxviruses B9 family.

The chain is T4 protein from Rabbit fibroma virus (strain Kasza) (RFV).